The chain runs to 68 residues: Conotoxin Pu5.5 (68 aa).

An N-terminal signal peptide occupies residues 1–22 (MRCVPVFIILLVLIASAPSVDA). A propeptide spanning residues 23-49 (RPQTKDDALASFRDSIKRHLQTLLDAR) is cleaved from the precursor.

Belongs to the conotoxin T superfamily. Post-translationally, contains 2 disulfide bonds that can be either 'C1-C3, C2-C4' or 'C1-C4, C2-C3', since these disulfide connectivities have been observed for conotoxins with cysteine framework V (for examples, see AC P0DQQ7 and AC P81755). In terms of tissue distribution, expressed by the venom duct.

The protein localises to the secreted. The polypeptide is Conotoxin Pu5.5 (Conus pulicarius (Flea-bitten cone)).